Here is a 341-residue protein sequence, read N- to C-terminus: Tryptophan--tRNA ligase (341 aa).

Residues 11 to 13 (RPT) and 19 to 20 (GH) contribute to the ATP site. Positions 12–20 (PTGKLHIGH) match the 'HIGH' region motif. Residue aspartate 140 coordinates L-tryptophan. ATP contacts are provided by residues 152 to 154 (GND), leucine 194, and 202 to 206 (KMSKS). Positions 202-206 (KMSKS) match the 'KMSKS' region motif.

This sequence belongs to the class-I aminoacyl-tRNA synthetase family. In terms of assembly, homodimer.

It is found in the cytoplasm. It carries out the reaction tRNA(Trp) + L-tryptophan + ATP = L-tryptophyl-tRNA(Trp) + AMP + diphosphate + H(+). Functionally, catalyzes the attachment of tryptophan to tRNA(Trp). This Lactococcus lactis subsp. lactis (strain IL1403) (Streptococcus lactis) protein is Tryptophan--tRNA ligase.